The primary structure comprises 383 residues: Plant intracellular Ras-group-related LRR protein 8 (383 aa).

LRR repeat units follow at residues 56-79 (RQNIKTLDLSGMSLASLSASSINL), 80-102 (ASISKLDLSNNNIQKIPESLVAR), 104-126 (LNLWALDLQSNQLKTLPNSIGCL), 127-149 (SKLKFLNVSGNYLQSLPKTIEDC), 151-173 (SLEELNANFNELTRLPDAIGFEL), 174-197 (TNLTKLSVNSNKLVLLPNSVSYLT), 199-219 (LRVLDARLNRLSSLPEDLENL), 221-244 (NLQVLNVSQNFQHLTTLPYSVGLL), 245-268 (ISLVELDVSYNGITVLPDSLGCLR), and 270-290 (IQKLSVEGNPLISPPFEVVEQ). Positions 291-298 (GLEALKQY) match the GVYW; degenerate motif.

The protein belongs to the SHOC2 family. As to expression, widely expressed except flowers.

Leucine-rich repeat protein that likely mediates protein interactions, possibly in the context of signal transduction. The chain is Plant intracellular Ras-group-related LRR protein 8 (PIRL8) from Arabidopsis thaliana (Mouse-ear cress).